The following is a 520-amino-acid chain: Beta-galactoside-specific lectin 4 (520 aa).

N-linked (GlcNAc...) asparagine glycosylation occurs at N107. Residue E159 is part of the active site. C240 and C266 are disulfide-bonded. Residues 241 to 265 constitute a propeptide, connecting peptide; the sequence is GERPSSSDVRYWPLVIRPVIADDVT. One can recognise a Ricin B-type lectin 1 domain in the interval 269 to 396; sequence SEPTVRIVGR…YTLGQGWLAG (128 aa). 284–286 contacts D-galactose; it reads DVR. N322 is a glycosylation site (N-linked (GlcNAc...) asparagine). A disulfide bridge connects residues C325 and C342. N-linked (GlcNAc...) asparagine glycans are attached at residues N357 and N397. The Ricin B-type lectin 2 domain maps to 400–520; that stretch reads APREVTIYGF…KPNQMWLPVP (121 aa). Intrachain disulfides connect C413/C426 and C451/C467. 494–496 contributes to the D-galactose binding site; sequence DVA.

This sequence belongs to the ribosome-inactivating protein family. Type 2 RIP subfamily. Disulfide-linked dimer of A and B chains.

It catalyses the reaction Endohydrolysis of the N-glycosidic bond at one specific adenosine on the 28S rRNA.. Functionally, the A chain is responsible for inhibiting protein synthesis through the catalytic inactivation of 60S ribosomal subunits by removing adenine from position 4,324 of 28S rRNA. The B chain binds to cell receptors and probably facilitates the entry into the cell of the A chain; B chains are also responsible for cell agglutination (lectin activity). Inhibits growth of the human tumor cell line Molt4. This is Beta-galactoside-specific lectin 4 from Viscum album (European mistletoe).